The primary structure comprises 92 residues: Bombyxin A-6 (92 aa).

Positions 1–19 (MKILLAIALMLSTVMWVST) are cleaved as a signal peptide. Residue Gln-20 is modified to Pyrrolidone carboxylic acid. Cystine bridges form between Cys-29–Cys-79, Cys-41–Cys-92, and Cys-78–Cys-83. The propeptide at 50 to 70 (SGAQFASYGSAWLMPYSEGRG) is c peptide like.

Belongs to the insulin family. Heterodimer of a B chain and an A chain linked by two disulfide bonds.

It is found in the secreted. Its function is as follows. Brain peptide responsible for activation of prothoracic glands to produce ecdysone in insects. The protein is Bombyxin A-6 (BBXA6) of Bombyx mori (Silk moth).